A 201-amino-acid chain; its full sequence is Large ribosomal subunit protein uL4 (201 aa).

Residues 39 to 72 (KRQGTSAQKSRSEVIGSGKKPWRQKGTGRARAGS) are disordered.

It belongs to the universal ribosomal protein uL4 family. Part of the 50S ribosomal subunit.

Its function is as follows. One of the primary rRNA binding proteins, this protein initially binds near the 5'-end of the 23S rRNA. It is important during the early stages of 50S assembly. It makes multiple contacts with different domains of the 23S rRNA in the assembled 50S subunit and ribosome. Forms part of the polypeptide exit tunnel. This is Large ribosomal subunit protein uL4 from Wigglesworthia glossinidia brevipalpis.